The chain runs to 1235 residues: Major DNA-binding protein (1235 aa).

The tract at residues glycine 536–glycine 584 is disordered. Residues glycine 545–glycine 584 are compositionally biased toward gly residues. Positions phenylalanine 846 to tryptophan 847 match the Required for filament formation motif. Positions glycine 1214 to glycine 1226 are enriched in gly residues. The disordered stretch occupies residues glycine 1214 to leucine 1235. A required for nuclear localization region spans residues arginine 1232–leucine 1235.

It belongs to the herpesviridae major DNA-binding protein family. Homooligomers. Forms double-helical filaments necessary for the formation of replication compartments within the host nucleus. Interacts with the origin-binding protein. Interacts with the helicase primase complex; this interaction stimulates primer synthesis activity of the helicase-primase complex. Interacts with the DNA polymerase. Interacts with the alkaline exonuclease; this interaction increases its nuclease processivity.

The protein localises to the host nucleus. In terms of biological role, plays several crucial roles in viral infection. Participates in the opening of the viral DNA origin to initiate replication by interacting with the origin-binding protein. May disrupt loops, hairpins and other secondary structures present on ssDNA to reduce and eliminate pausing of viral DNA polymerase at specific sites during elongation. Promotes viral DNA recombination by performing strand-transfer, characterized by the ability to transfer a DNA strand from a linear duplex to a complementary single-stranded DNA circle. Can also catalyze the renaturation of complementary single strands. Additionally, reorganizes the host cell nucleus, leading to the formation of prereplicative sites and replication compartments. This process is driven by the protein which can form double-helical filaments in the absence of DNA. This Homo sapiens (Human) protein is Major DNA-binding protein.